The following is a 400-amino-acid chain: Homoserine O-acetyltransferase (400 aa).

The region spanning 64-373 is the AB hydrolase-1 domain; sequence NAILICHALT…TDRGHDAFLL (310 aa). Ser169 (nucleophile) is an active-site residue. Arg239 is a binding site for substrate. Residues Asp335 and His368 contribute to the active site. Asp369 contributes to the substrate binding site.

The protein belongs to the AB hydrolase superfamily. MetX family. In terms of assembly, homodimer.

Its subcellular location is the cytoplasm. It carries out the reaction L-homoserine + acetyl-CoA = O-acetyl-L-homoserine + CoA. Its pathway is amino-acid biosynthesis; L-methionine biosynthesis via de novo pathway; O-acetyl-L-homoserine from L-homoserine: step 1/1. Transfers an acetyl group from acetyl-CoA to L-homoserine, forming acetyl-L-homoserine. The chain is Homoserine O-acetyltransferase from Bradyrhizobium diazoefficiens (strain JCM 10833 / BCRC 13528 / IAM 13628 / NBRC 14792 / USDA 110).